We begin with the raw amino-acid sequence, 484 residues long: UDP-glycosyltransferase 73B4 (484 aa).

Residue His18 is the Proton acceptor of the active site. An anthocyanidin is bound by residues His18 and Asn89. Catalysis depends on Asp129, which acts as the Charge relay. The UDP-alpha-D-glucose site is built by Ala356, Gln358, His373, Trp376, Asn377, Ser378, and Glu381. Ala396 is a binding site for an anthocyanidin. Glu397 and Gln398 together coordinate UDP-alpha-D-glucose.

This sequence belongs to the UDP-glycosyltransferase family. In terms of tissue distribution, specifically expressed in roots.

The enzyme catalyses a flavonol + UDP-alpha-D-glucose = a flavonol 3-O-beta-D-glucoside + UDP + H(+). In terms of biological role, possesses quercetin 3-O-glucosyltransferase and low 7-O-glucosyltransferase activities in vitro. Also active in vitro on benzoates and benzoate derivatives. Can detoxify the explosive 2,4,6-trinitrotoluene in plant by forming O- or C-glucose conjugates. The polypeptide is UDP-glycosyltransferase 73B4 (UGT73B4) (Arabidopsis thaliana (Mouse-ear cress)).